The primary structure comprises 308 residues: MTKIAFIGVGKIGQTIAFNTIMDGYADEVMIYDIIPELPEKFEHELRHALASKRLKVELLSTNNLDDVAGADIVVITAGKPRKPGMSRRDLFVDNAKIMMDLANKLPKKNHGAVYIMVSNPVDMMASVFARYSREFVISTGDQVETMRLRAYIAKKLKIPVYRVNGFVGGEHGEDAVVLWSTVTVNGKPFSEDLGVTKAEVEDYVKKIPGEIIRVMGGTTWGPGTIIAELIRAVALNENKVMSIATPRQFEDEIIHVSVPTVVGSSIGPSLENLLDEKDRWNLMASMKDFYNVYKENLKHLETSIQAQ.

NAD(+) is bound by residues 8–13 and aspartate 33; that span reads GVGKIG. Substrate is bound by residues arginine 82 and arginine 88. Residues asparagine 95 and 118 to 120 contribute to the NAD(+) site; that span reads VSN. Substrate contacts are provided by asparagine 120 and arginine 148. Histidine 172 acts as the Proton acceptor in catalysis.

Belongs to the LDH/MDH superfamily.

It carries out the reaction (S)-malate + NAD(+) = oxaloacetate + NADH + H(+). Catalyzes the reversible oxidation of malate to oxaloacetate. This chain is Malate dehydrogenase (mdh), found in Sulfurisphaera tokodaii (strain DSM 16993 / JCM 10545 / NBRC 100140 / 7) (Sulfolobus tokodaii).